Consider the following 932-residue polypeptide: Isoleucine--tRNA ligase (932 aa).

A 'HIGH' region motif is present at residues 59-69; the sequence is PYANGTIHIGH. E562 contacts L-isoleucyl-5'-AMP. The 'KMSKS' region signature appears at 603-607; sequence KMSKS. An ATP-binding site is contributed by K606. Positions 899, 902, 915, and 918 each coordinate Zn(2+).

It belongs to the class-I aminoacyl-tRNA synthetase family. IleS type 1 subfamily. Monomer. It depends on Zn(2+) as a cofactor.

It is found in the cytoplasm. The enzyme catalyses tRNA(Ile) + L-isoleucine + ATP = L-isoleucyl-tRNA(Ile) + AMP + diphosphate. Catalyzes the attachment of isoleucine to tRNA(Ile). As IleRS can inadvertently accommodate and process structurally similar amino acids such as valine, to avoid such errors it has two additional distinct tRNA(Ile)-dependent editing activities. One activity is designated as 'pretransfer' editing and involves the hydrolysis of activated Val-AMP. The other activity is designated 'posttransfer' editing and involves deacylation of mischarged Val-tRNA(Ile). The sequence is that of Isoleucine--tRNA ligase from Pasteurella multocida (strain Pm70).